Consider the following 268-residue polypeptide: Secreted RxLR effector protein 6 (268 aa).

An N-terminal signal peptide occupies residues 1–19; it reads MRGAFYIAIALLVVRSRTA. The RxLR-dEER signature appears at 48-63; it reads RYLRDGLAHSAANEER. Residues 90–123 are disordered; sequence IGGHSHTPKSKRKVNLSPAKSQSGIRKKSTSINK. Over residues 107 to 123 the composition is skewed to polar residues; the sequence is PAKSQSGIRKKSTSINK.

Belongs to the RxLR effector family.

It localises to the secreted. It is found in the host nucleus. The protein resides in the host cytoplasm. In terms of biological role, secreted effector that completely suppresses the host cell death induced by cell death-inducing proteins. This chain is Secreted RxLR effector protein 6, found in Plasmopara viticola (Downy mildew of grapevine).